The following is a 196-amino-acid chain: 3-isopropylmalate dehydratase small subunit (196 aa).

It belongs to the LeuD family. LeuD type 1 subfamily. As to quaternary structure, heterodimer of LeuC and LeuD.

The catalysed reaction is (2R,3S)-3-isopropylmalate = (2S)-2-isopropylmalate. Its pathway is amino-acid biosynthesis; L-leucine biosynthesis; L-leucine from 3-methyl-2-oxobutanoate: step 2/4. Functionally, catalyzes the isomerization between 2-isopropylmalate and 3-isopropylmalate, via the formation of 2-isopropylmaleate. In Corynebacterium efficiens (strain DSM 44549 / YS-314 / AJ 12310 / JCM 11189 / NBRC 100395), this protein is 3-isopropylmalate dehydratase small subunit.